We begin with the raw amino-acid sequence, 279 residues long: MKRVGAHVSIAGGVENAPLNATAIGAKAFALFTRNQRQWHSPPLQKASVDAFRRHCEAGGFDARHILPHDSYLINLGNPDPDKLERSRKAFIEEMERAETLGLVLLNFHPGSHLNAIGEEECLGLIADSINLAIKATDRVTAVIENTAGQGTNLGSRFEHLRAIIDRIEDRSRIGVCLDTCHLFASGYDLGTAEAAERTFEEFDRTVGMQYLKGMHLNDALRPLGSRLDRHACIGKGMIGIEGFRYIMQSPLFEEIPLILETPDSEGWKEEIELLYSLE.

Residues histidine 69, histidine 109, glutamate 145, aspartate 179, histidine 182, histidine 216, aspartate 229, histidine 231, and glutamate 261 each contribute to the Zn(2+) site.

It belongs to the AP endonuclease 2 family. Zn(2+) serves as cofactor.

The catalysed reaction is Endonucleolytic cleavage to 5'-phosphooligonucleotide end-products.. Functionally, endonuclease IV plays a role in DNA repair. It cleaves phosphodiester bonds at apurinic or apyrimidinic (AP) sites, generating a 3'-hydroxyl group and a 5'-terminal sugar phosphate. This Chlorobium phaeovibrioides (strain DSM 265 / 1930) (Prosthecochloris vibrioformis (strain DSM 265)) protein is Probable endonuclease 4.